Here is a 160-residue protein sequence, read N- to C-terminus: MKLNEIRDNEGARKSRIRVGRGIGSGKGKTGGRGVKGQKSRTGVAIKGYEGGQMPIHMRLPKRGFKNLFRPDYNSVNLGRVQAAVDAGKLDKGATVDAAALVAAGVIRRAKDGVRLLAQGELKAKLSFEVAGVSASAKEAVEKAGGSVTVVGPKAKAAAE.

Basic and acidic residues predominate over residues 1–13 (MKLNEIRDNEGAR). The disordered stretch occupies residues 1-41 (MKLNEIRDNEGARKSRIRVGRGIGSGKGKTGGRGVKGQKSR). Gly residues predominate over residues 21–35 (RGIGSGKGKTGGRGV).

Belongs to the universal ribosomal protein uL15 family. As to quaternary structure, part of the 50S ribosomal subunit.

Its function is as follows. Binds to the 23S rRNA. This is Large ribosomal subunit protein uL15 from Parvibaculum lavamentivorans (strain DS-1 / DSM 13023 / NCIMB 13966).